The primary structure comprises 101 residues: DNA-binding protein Fis (101 aa).

The segment at residues 77–96 (QTRAANMLGINRGTLRKKLK) is a DNA-binding region (H-T-H motif).

This sequence belongs to the transcriptional regulatory Fis family. In terms of assembly, homodimer.

Activates ribosomal RNA transcription. Plays a direct role in upstream activation of rRNA promoters. The sequence is that of DNA-binding protein Fis from Shewanella halifaxensis (strain HAW-EB4).